Here is a 206-residue protein sequence, read N- to C-terminus: MATVVNMDTVVNLDDVSLADKCCWICKEACDIVPNYCKCRGDNKIVHKECLEEWINTDVVKNKSCAICESPYNLKRRYKKITKWRCYKRDCHDSLLVNMSLCLIVGGMGGYLLISTEIVKLIASEEVSNIAKVFLVSASMGPFMVSALTMVRACIDCRTYFIATRERNTIHEVAEMEDVEEVEEVNDDDGDEYVDAVEEIVVESPA.

Over 1 to 93 the chain is Cytoplasmic; that stretch reads MATVVNMDTV…WRCYKRDCHD (93 aa). Residues 15-75 form an RING-CH-type zinc finger; sequence DVSLADKCCW…AICESPYNLK (61 aa). Zn(2+) is bound by residues Cys23, Cys26, Cys37, Cys39, His47, Cys50, Cys65, and Cys68. The helical transmembrane segment at 94-114 threads the bilayer; the sequence is SLLVNMSLCLIVGGMGGYLLI. The Lumenal segment spans residues 115 to 129; that stretch reads STEIVKLIASEEVSN. A helical transmembrane segment spans residues 130-150; sequence IAKVFLVSASMGPFMVSALTM. Over 151–206 the chain is Cytoplasmic; sequence VRACIDCRTYFIATRERNTIHEVAEMEDVEEVEEVNDDDGDEYVDAVEEIVVESPA.

The protein belongs to the poxviridae LAP protein family.

Its subcellular location is the host membrane. The protein localises to the host Golgi apparatus. The protein resides in the host trans-Golgi network membrane. It localises to the host early endosome membrane. The enzyme catalyses S-ubiquitinyl-[E2 ubiquitin-conjugating enzyme]-L-cysteine + [acceptor protein]-L-lysine = [E2 ubiquitin-conjugating enzyme]-L-cysteine + N(6)-ubiquitinyl-[acceptor protein]-L-lysine.. In terms of biological role, E3 ubiquitin-protein ligase which promotes ubiquitination and subsequent degradation of host MHC-I and CD4 molecules, presumably to prevent lysis of infected cells by cytotoxic T-lymphocytes and NK cell. Binds target molecules through transmembrane interaction. The result of this ubiquitination is the enhancement of the endocytosis of the target chain and the delivery to the lysosome, where it is proteolytically destroyed. This is E3 ubiquitin-protein ligase LAP (LAP) from Myxoma virus (strain Lausanne) (MYXV).